Consider the following 361-residue polypeptide: DNA replication and repair protein RecF (361 aa).

ATP is bound at residue glycine 30 to threonine 37.

Belongs to the RecF family.

The protein localises to the cytoplasm. Its function is as follows. The RecF protein is involved in DNA metabolism; it is required for DNA replication and normal SOS inducibility. RecF binds preferentially to single-stranded, linear DNA. It also seems to bind ATP. In Clostridium botulinum (strain Alaska E43 / Type E3), this protein is DNA replication and repair protein RecF.